The chain runs to 62 residues: Chromatin protein Cren7 2 (62 aa).

Belongs to the Cren7 family. As to quaternary structure, monomer. In terms of processing, methylated at multiple sites, to varying extents.

It localises to the chromosome. The protein localises to the cytoplasm. In terms of biological role, a chromatin protein, binds double-stranded DNA without sequence specificity. Constrains negative DNA supercoils. The protein is Chromatin protein Cren7 2 (cren7-2) of Hyperthermus butylicus (strain DSM 5456 / JCM 9403 / PLM1-5).